The chain runs to 253 residues: 1-(5-phosphoribosyl)-5-[(5-phosphoribosylamino)methylideneamino] imidazole-4-carboxamide isomerase (253 aa).

The active-site Proton acceptor is the D19. Residue D141 is the Proton donor of the active site.

This sequence belongs to the HisA/HisF family.

Its subcellular location is the cytoplasm. It carries out the reaction 1-(5-phospho-beta-D-ribosyl)-5-[(5-phospho-beta-D-ribosylamino)methylideneamino]imidazole-4-carboxamide = 5-[(5-phospho-1-deoxy-D-ribulos-1-ylimino)methylamino]-1-(5-phospho-beta-D-ribosyl)imidazole-4-carboxamide. It participates in amino-acid biosynthesis; L-histidine biosynthesis; L-histidine from 5-phospho-alpha-D-ribose 1-diphosphate: step 4/9. The chain is 1-(5-phosphoribosyl)-5-[(5-phosphoribosylamino)methylideneamino] imidazole-4-carboxamide isomerase from Rhodopirellula baltica (strain DSM 10527 / NCIMB 13988 / SH1).